The following is a 68-amino-acid chain: Large ribosomal subunit protein uL29 (68 aa).

It belongs to the universal ribosomal protein uL29 family.

The sequence is that of Large ribosomal subunit protein uL29 from Albidiferax ferrireducens (strain ATCC BAA-621 / DSM 15236 / T118) (Rhodoferax ferrireducens).